The following is a 394-amino-acid chain: MEKKKNNNNGGDFGEEESSIDGDILESILSYLPLLDLDSACQVSKSWNRAVFYSLRRLKTMPWLFVYNQRNSPPYTMATMAMAYDPKSEAWIELNTASSPVEHVSVARSSHSTLLYALSPARFSFSTDAFHLTWQHVAPPRVWRIDPIVAVVGRSLIIAGGVCDFEEDRFAVELFDIESGDGAWERCESMPDFLYESASSTWLSVAVSSEKMYVTEKRSGVTCSFNPVTRSWTKLLDLCPGECSLYSRSIGFSVNRLIMAGIIGDEYNPTGIELWEVIDSDESHLKFESIGSMPETYLEKLRGINSDWPLTSIVLNAVGDMVYVHGAAENGGEIVAAEIEGGKLCKWRTLPNADATWKKSHAAERVIVACSNVGFSDLKLAFRNNLSFLSTSKY.

In terms of domain architecture, F-box spans 15 to 62; sequence EEESSIDGDILESILSYLPLLDLDSACQVSKSWNRAVFYSLRRLKTMP. Kelch repeat units lie at residues 65–111, 155–204, 206–252, and 321–369; these read FVYN…RSSH, SLII…TWLS, AVSS…SIGF, and MVYV…VIVA.

The polypeptide is F-box/kelch-repeat protein At1g23390 (Arabidopsis thaliana (Mouse-ear cress)).